The chain runs to 113 residues: Large ribosomal subunit protein eL31 (113 aa).

The protein belongs to the eukaryotic ribosomal protein eL31 family. In terms of assembly, component of the large ribosomal subunit (LSU). Mature yeast ribosomes consist of a small (40S) and a large (60S) subunit. The 40S small subunit contains 1 molecule of ribosomal RNA (18S rRNA) and at least 33 different proteins. The large 60S subunit contains 3 rRNA molecules (25S, 5.8S and 5S rRNA) and at least 46 different proteins.

Its subcellular location is the cytoplasm. Functionally, component of the ribosome, a large ribonucleoprotein complex responsible for the synthesis of proteins in the cell. The small ribosomal subunit (SSU) binds messenger RNAs (mRNAs) and translates the encoded message by selecting cognate aminoacyl-transfer RNA (tRNA) molecules. The large subunit (LSU) contains the ribosomal catalytic site termed the peptidyl transferase center (PTC), which catalyzes the formation of peptide bonds, thereby polymerizing the amino acids delivered by tRNAs into a polypeptide chain. The nascent polypeptides leave the ribosome through a tunnel in the LSU and interact with protein factors that function in enzymatic processing, targeting, and the membrane insertion of nascent chains at the exit of the ribosomal tunnel. This Schizosaccharomyces pombe (strain 972 / ATCC 24843) (Fission yeast) protein is Large ribosomal subunit protein eL31 (rpl31).